A 664-amino-acid polypeptide reads, in one-letter code: Exoribonuclease 2 (664 aa).

In terms of domain architecture, RNB spans 193-521 (RIDMTHIPFV…INHRMLKALI (329 aa)). The region spanning 568 to 650 (QTLFTGEIFD…ENRSLVAKPT (83 aa)) is the S1 motif domain.

It belongs to the RNR ribonuclease family. RNase II subfamily.

It is found in the cytoplasm. It catalyses the reaction Exonucleolytic cleavage in the 3'- to 5'-direction to yield nucleoside 5'-phosphates.. In terms of biological role, involved in mRNA degradation. Hydrolyzes single-stranded polyribonucleotides processively in the 3' to 5' direction. This Vibrio vulnificus (strain YJ016) protein is Exoribonuclease 2.